A 133-amino-acid chain; its full sequence is Otoraplin (133 aa).

The N-terminal stretch at 1–23 (MAKTFYVVVIVLCLGFIHQKAYG) is a signal peptide. 2 disulfide bridges follow: Cys-35–Cys-40 and Cys-58–Cys-132. Residues 42 to 115 (YAISFGRAED…PSSLVTELTV (74 aa)) form the SH3 domain.

Belongs to the MIA/OTOR family.

The protein resides in the secreted. The sequence is that of Otoraplin (OTOR) from Aquarana catesbeiana (American bullfrog).